Reading from the N-terminus, the 298-residue chain is MTDLHTDVERYLRYLSVERQLSPITLLNYQRQLEAIINFASENGLQSWQQCDVTVVRNFAVRSRRKGLGAASLALRLSALRSFFDWLVSQNELKANPAKGVSAPKAPRHLPKNIDVDDMNRLLDIDINDPLAVRDRAMLEVMYGAGLRLSELVGLDIKHLDLESGEVWVMGKGSKERRLPIGRNAVAWIEHWLDLRDLFGSEDDALFLSKLGKRISARNVQKRFAEWGIKQGLNNHVHPHKLRHSFATHMLESSGDLRGVQELLGHANLSTTQIYTHLDFQHLASVYDAAHPRAKRGK.

One can recognise a Core-binding (CB) domain in the interval 2 to 88 (TDLHTDVERY…ALRSFFDWLV (87 aa)). In terms of domain architecture, Tyr recombinase spans 109–288 (HLPKNIDVDD…DFQHLASVYD (180 aa)). Active-site residues include Arg-148, Lys-172, His-240, Arg-243, and His-266. The O-(3'-phospho-DNA)-tyrosine intermediate role is filled by Tyr-275.

Belongs to the 'phage' integrase family. XerC subfamily. Forms a cyclic heterotetrameric complex composed of two molecules of XerC and two molecules of XerD, in which XerC interacts with XerD via its C-terminal region, XerD interacts with XerC via its C-terminal region and so on.

The protein resides in the cytoplasm. Its activity is regulated as follows. FtsK may regulate the catalytic switch between XerC and XerD in the heterotetrameric complex during the two steps of the recombination process. Functionally, site-specific tyrosine recombinase, which acts by catalyzing the cutting and rejoining of the recombining DNA molecules. Binds cooperatively to specific DNA consensus sequences that are separated from XerD binding sites by a short central region, forming the heterotetrameric XerC-XerD complex that recombines DNA substrates. The complex is essential to convert dimers of the bacterial chromosome into monomers to permit their segregation at cell division. It also contributes to the segregational stability of plasmids. In the complex XerC specifically exchanges the top DNA strands. In Escherichia coli O139:H28 (strain E24377A / ETEC), this protein is Tyrosine recombinase XerC.